A 269-amino-acid polypeptide reads, in one-letter code: Phosphate import ATP-binding protein PstB (269 aa).

The region spanning 22–264 is the ABC transporter domain; it reads IKVKNVDFFY…PANKKTEDYI (243 aa). Residue 55 to 62 coordinates ATP; sequence GSSGSGKS.

Belongs to the ABC transporter superfamily. Phosphate importer (TC 3.A.1.7) family. As to quaternary structure, the complex is composed of two ATP-binding proteins (PstB), two transmembrane proteins (PstC and PstA) and a solute-binding protein (PstS).

The protein resides in the cell membrane. It catalyses the reaction phosphate(out) + ATP + H2O = ADP + 2 phosphate(in) + H(+). Functionally, part of the ABC transporter complex PstSACB involved in phosphate import. Responsible for energy coupling to the transport system. The polypeptide is Phosphate import ATP-binding protein PstB (Spiroplasma kunkelii).